The chain runs to 329 residues: Fructose-1,6-bisphosphatase class 1 2 (329 aa).

Residues Glu92, Asp111, Leu113, and Asp114 each coordinate Mg(2+). Residues Asp114–Ser117 and Asn206 contribute to the substrate site. Mg(2+) is bound at residue Glu278.

The protein belongs to the FBPase class 1 family. In terms of assembly, homotetramer. The cofactor is Mg(2+).

It is found in the cytoplasm. The enzyme catalyses beta-D-fructose 1,6-bisphosphate + H2O = beta-D-fructose 6-phosphate + phosphate. It functions in the pathway carbohydrate biosynthesis; gluconeogenesis. The chain is Fructose-1,6-bisphosphatase class 1 2 from Xanthobacter autotrophicus (strain ATCC BAA-1158 / Py2).